A 195-amino-acid polypeptide reads, in one-letter code: Cytochrome c oxidase assembly protein CtaG (195 aa).

At 1 to 9 the chain is on the cytoplasmic side; it reads MALNGPQKT. A helical; Signal-anchor for type II membrane protein transmembrane segment spans residues 10-30; sequence VVQLVGVVVLMGGLAWASVPF. Topologically, residues 31–195 are periplasmic; sequence YDWFCRVTGF…DTSGAETELN (165 aa).

Belongs to the COX11/CtaG family.

The protein localises to the cell inner membrane. Exerts its effect at some terminal stage of cytochrome c oxidase synthesis, probably by being involved in the insertion of the copper B into subunit I. The polypeptide is Cytochrome c oxidase assembly protein CtaG (Ruegeria sp. (strain TM1040) (Silicibacter sp.)).